The sequence spans 163 residues: Nucleotide-binding protein Ava_2001 (163 aa).

Belongs to the YajQ family.

Its function is as follows. Nucleotide-binding protein. The protein is Nucleotide-binding protein Ava_2001 of Trichormus variabilis (strain ATCC 29413 / PCC 7937) (Anabaena variabilis).